Here is a 263-residue protein sequence, read N- to C-terminus: Small ribosomal subunit protein uS2 (263 aa).

The disordered stretch occupies residues 228–263 (QLEEPEADLADEDDNGMTTSDDGDAEALDIPDDSDA). Residues 230 to 263 (EEPEADLADEDDNGMTTSDDGDAEALDIPDDSDA) are compositionally biased toward acidic residues.

This sequence belongs to the universal ribosomal protein uS2 family.

The protein is Small ribosomal subunit protein uS2 of Thermosynechococcus vestitus (strain NIES-2133 / IAM M-273 / BP-1).